The following is a 495-amino-acid chain: ATP synthase subunit alpha, chloroplastic (495 aa).

Residue 170–177 (GDRQTGKT) participates in ATP binding.

This sequence belongs to the ATPase alpha/beta chains family. F-type ATPases have 2 components, CF(1) - the catalytic core - and CF(0) - the membrane proton channel. CF(1) has five subunits: alpha(3), beta(3), gamma(1), delta(1), epsilon(1). CF(0) has four main subunits: a, b, b' and c.

The protein resides in the plastid. It is found in the chloroplast thylakoid membrane. The catalysed reaction is ATP + H2O + 4 H(+)(in) = ADP + phosphate + 5 H(+)(out). Produces ATP from ADP in the presence of a proton gradient across the membrane. The alpha chain is a regulatory subunit. This chain is ATP synthase subunit alpha, chloroplastic, found in Cyanidioschyzon merolae (strain NIES-3377 / 10D) (Unicellular red alga).